We begin with the raw amino-acid sequence, 167 residues long: Acetolactate synthase small subunit (167 aa).

The 75-residue stretch at 7 to 81 folds into the ACT domain; the sequence is TLSVLVEAKP…NVIKIVELED (75 aa).

It belongs to the acetolactate synthase small subunit family. Dimer of large and small chains.

The catalysed reaction is 2 pyruvate + H(+) = (2S)-2-acetolactate + CO2. It participates in amino-acid biosynthesis; L-isoleucine biosynthesis; L-isoleucine from 2-oxobutanoate: step 1/4. Its pathway is amino-acid biosynthesis; L-valine biosynthesis; L-valine from pyruvate: step 1/4. The sequence is that of Acetolactate synthase small subunit (ilvH) from Mycobacterium avium.